We begin with the raw amino-acid sequence, 768 residues long: Protein ITPRID2 (768 aa).

3 disordered regions span residues 1-24 (MTTEDHLLRTASQHSDSSGFAEDS), 39-78 (LQAMGSSADSCDSETTVTSLGEDLATPTAQDQPYFNESEE), and 98-124 (RKSGSQDFPQCNTIENPGTKQSTCSPG). Composition is skewed to polar residues over residues 39–57 (LQAMGSSADSCDSETTVTS) and 102–122 (SQDFPQCNTIENPGTKQSTCS). Phosphoserine occurs at positions 153, 177, 246, 248, 255, 268, 276, and 312. The interval 315–338 (SVKKEEAPQSEAPRVEECHHGRTP) is disordered. Basic and acidic residues predominate over residues 316-334 (VKKEEAPQSEAPRVEECHH). A Glycyl lysine isopeptide (Lys-Gly) (interchain with G-Cter in SUMO2) cross-link involves residue Lys317. Phosphoserine occurs at positions 378 and 411. A coiled-coil region spans residues 468-546 (QELQVMRRSL…GLEEQLRAVR (79 aa)). Phosphoserine occurs at positions 549, 564, 569, 572, 627, and 643. Disordered stretches follow at residues 605 to 647 (IPPG…VGKP) and 663 to 718 (ALTP…AAEE). Residues 610–627 (SSESVFSQATSESSSVCS) show a composition bias toward polar residues. Phosphothreonine is present on Thr665. A compositionally biased stretch (polar residues) spans 667–677 (TAPSRTGSVQT). Ser670 carries the post-translational modification Phosphoserine. Residue Thr677 is modified to Phosphothreonine. The span at 682–694 (ESSEEVDAAEEAP) shows a compositional bias: acidic residues.

Its subcellular location is the cytoplasm. The chain is Protein ITPRID2 from Pongo abelii (Sumatran orangutan).